A 380-amino-acid polypeptide reads, in one-letter code: Cytochrome b (380 aa).

The next 4 membrane-spanning stretches (helical) occupy residues 34–54 (FGSLLGICLLTQILTGLLLAT), 78–99 (WLIRNLHANGASFFFICIYLHI), 114–134 (WNTGIILLLTLMATAFVGYVL), and 179–199 (FFALHFLLPFMIAGLALIHLT). Heme b is bound by residues His-84 and His-98. 2 residues coordinate heme b: His-183 and His-197. Residue His-202 coordinates a ubiquinone. 4 consecutive transmembrane segments (helical) span residues 227-247 (LKDILGFIIMFLPLTTLALFS), 289-309 (LGGVLALAASVLVLFLVPLLH), 321-341 (LSQFLFWTLVANLLILTWVGS), and 348-368 (FIIIGQLASLTYFTILLLLFP).

This sequence belongs to the cytochrome b family. As to quaternary structure, the cytochrome bc1 complex contains 11 subunits: 3 respiratory subunits (MT-CYB, CYC1 and UQCRFS1), 2 core proteins (UQCRC1 and UQCRC2) and 6 low-molecular weight proteins (UQCRH/QCR6, UQCRB/QCR7, UQCRQ/QCR8, UQCR10/QCR9, UQCR11/QCR10 and a cleavage product of UQCRFS1). This cytochrome bc1 complex then forms a dimer. The cofactor is heme b.

It is found in the mitochondrion inner membrane. Component of the ubiquinol-cytochrome c reductase complex (complex III or cytochrome b-c1 complex) that is part of the mitochondrial respiratory chain. The b-c1 complex mediates electron transfer from ubiquinol to cytochrome c. Contributes to the generation of a proton gradient across the mitochondrial membrane that is then used for ATP synthesis. This chain is Cytochrome b (MT-CYB), found in Pinguinus impennis (Great auk).